The primary structure comprises 180 residues: MEKFFNQFFENIGEDKNREGLKETPKRVQELWKFLYKGYKEDPRVALKSAYFQGVCDEMIVAQNIEFYSTCEHHLLPFFGNISVGYIPKEKIVGISAIAKLIEIYSKRLQIQERLTTQIAETFDEIIEPRGVIVVCEAKHLCMSMQGVQKQNAIIKTSVLRGLFKKDPKTRAEFMQLLKS.

Residues Cys71, His74, and Cys142 each contribute to the Zn(2+) site.

It belongs to the GTP cyclohydrolase I family. In terms of assembly, toroid-shaped homodecamer, composed of two pentamers of five dimers.

It catalyses the reaction GTP + H2O = 7,8-dihydroneopterin 3'-triphosphate + formate + H(+). The protein operates within cofactor biosynthesis; 7,8-dihydroneopterin triphosphate biosynthesis; 7,8-dihydroneopterin triphosphate from GTP: step 1/1. This Helicobacter pylori (strain J99 / ATCC 700824) (Campylobacter pylori J99) protein is GTP cyclohydrolase 1 (folE).